We begin with the raw amino-acid sequence, 211 residues long: Soluble inorganic pyrophosphatase PPA1 (211 aa).

Residues Lys-61 and Arg-75 each coordinate substrate. Catalysis depends on Tyr-83, which acts as the Proton donor. Tyr-87 lines the substrate pocket. 3 residues coordinate Mg(2+): Asp-97, Asp-102, and Asp-134. Tyr-171 serves as a coordination point for substrate.

This sequence belongs to the PPase family. Mg(2+) serves as cofactor.

It is found in the cytoplasm. It carries out the reaction diphosphate + H2O = 2 phosphate + H(+). Its activity is regulated as follows. Strongly inhibited by Ca(2+). Its function is as follows. Catalyzes the irreversible hydrolysis of pyrophosphate (PPi) to phosphate. The sequence is that of Soluble inorganic pyrophosphatase PPA1 from Solanum tuberosum (Potato).